The following is a 56-amino-acid chain: uncharacterized protein (56 aa).

A helical membrane pass occupies residues 2–22 (ILYIIVAISILLNIILGIKVI).

It is found in the membrane. This is an uncharacterized protein from Methanocaldococcus jannaschii (strain ATCC 43067 / DSM 2661 / JAL-1 / JCM 10045 / NBRC 100440) (Methanococcus jannaschii).